The primary structure comprises 133 residues: Bacteriohemerythrin (133 aa).

Fe cation contacts are provided by His19, His56, Glu60, His75, His79, His115, and Asp120.

This sequence belongs to the hemerythrin family. Monomer.

Functionally, oxygen-binding protein. May be involved in a storage mechanism or for delivery to oxygen-requiring enzymes. The oxygen-binding site contains two iron atoms. This chain is Bacteriohemerythrin, found in Campylobacter jejuni subsp. jejuni serotype O:6 (strain 81116 / NCTC 11828).